We begin with the raw amino-acid sequence, 501 residues long: Iroquois-class homeodomain protein IRX-3 (501 aa).

Positions 125-188 form a DNA-binding region, homeobox; TALE-type; that stretch reads FGDPSRPKNA…ANARRRLKKE (64 aa). Residues 190–381 are disordered; the sequence is KMTWAPRSRT…SPPGAAVAPS (192 aa). Composition is skewed to acidic residues over residues 210 to 220 and 227 to 258; these read REEEDEEEDEE and ELEEEELGGEEEDTGGEGLADDDEDEEIDLEN. Residues serine 323 and serine 326 each carry the phosphoserine modification. Pro residues predominate over residues 324–339; that stretch reads LPSPPVSLDPCAPAPA.

This sequence belongs to the TALE/IRO homeobox family.

It localises to the nucleus. Functionally, transcription factor involved in SHH-dependent neural patterning. Together with NKX2-2 and NKX6-1 acts to restrict the generation of motor neurons to the appropriate region of the neural tube. Belongs to the class I proteins of neuronal progenitor factors, which are repressed by SHH signals. Involved in the transcriptional repression of MNX1 in non-motor neuron cells. Acts as a regulator of energy metabolism. The chain is Iroquois-class homeodomain protein IRX-3 (IRX3) from Homo sapiens (Human).